Reading from the N-terminus, the 341-residue chain is Tetraacyldisaccharide 4'-kinase (341 aa).

Position 54-61 (54-61 (TVGGTGKT)) interacts with ATP.

It belongs to the LpxK family.

The enzyme catalyses a lipid A disaccharide + ATP = a lipid IVA + ADP + H(+). It functions in the pathway glycolipid biosynthesis; lipid IV(A) biosynthesis; lipid IV(A) from (3R)-3-hydroxytetradecanoyl-[acyl-carrier-protein] and UDP-N-acetyl-alpha-D-glucosamine: step 6/6. Transfers the gamma-phosphate of ATP to the 4'-position of a tetraacyldisaccharide 1-phosphate intermediate (termed DS-1-P) to form tetraacyldisaccharide 1,4'-bis-phosphate (lipid IVA). The protein is Tetraacyldisaccharide 4'-kinase of Mesorhizobium japonicum (strain LMG 29417 / CECT 9101 / MAFF 303099) (Mesorhizobium loti (strain MAFF 303099)).